Reading from the N-terminus, the 253-residue chain is Porin thermoregulatory protein EnvY (253 aa).

One can recognise an HTH araC/xylS-type domain in the interval 149–246 (DSVCRIIQSD…GLTPLNYLAK (98 aa)). 2 DNA-binding regions (H-T-H motif) span residues 166 to 187 (RIVASSLCLSPSLLKKKLKNEN) and 213 to 236 (ITQVAQLCGYSSTSYFISVFKAFY).

In terms of biological role, influences the temperature-dependent expression of several E.coli envelope proteins, most notably the porins OmpF and OmpC and the lambda receptor, LamB. This chain is Porin thermoregulatory protein EnvY (envY), found in Escherichia coli (strain K12).